The primary structure comprises 147 residues: Calcium-regulated heat stable protein 1 (147 aa).

A compositionally biased stretch (pro residues) spans 1-12 (MSSEPPPPPQPP). The interval 1 to 49 (MSSEPPPPPQPPTHQTSIGLLDTPRARDRSPSPLRGNVVPSPLPTRRTR) is disordered. Position 2 is an N-acetylserine (Ser-2). A phosphoserine mark is found at Ser-30, Ser-32, and Ser-41. Thr-45 carries the post-translational modification Phosphothreonine. A phosphoserine mark is found at Ser-52 and Ser-58. One can recognise a CSD domain in the interval 62-129 (VYKGVCKCFC…KLQAVEVVIT (68 aa)). 2 positions are modified to phosphoserine: Ser-146 and Ser-147.

As to quaternary structure, homodimer. Interacts with STYX. Post-translationally, can be phosphorylated by DYRK2 (in vitro). Dephosphorylated by calcineurin in a Ca(2+) dependent manner, and probably by PP2A or PP4 serine phosphatases in cAMP- and PKC-mediated pathways. Widely expressed.

It is found in the cytoplasm. Its subcellular location is the P-body. The protein localises to the cytoplasmic granule. Binds mRNA and regulates the stability of target mRNA. The protein is Calcium-regulated heat stable protein 1 (Carhsp1) of Rattus norvegicus (Rat).